The chain runs to 374 residues: Calcium/calmodulin-dependent protein kinase type 1 (374 aa).

Positions 20 to 276 (YDFRDVLGTG…CEQALQHPWI (257 aa)) constitute a Protein kinase domain. ATP contacts are provided by residues 26 to 34 (LGTGAFSEV) and lysine 49. Lysine 59 is covalently cross-linked (Glycyl lysine isopeptide (Lys-Gly) (interchain with G-Cter in ubiquitin)). Aspartate 141 acts as the Proton acceptor in catalysis. Threonine 177 carries the post-translational modification Phosphothreonine; by CaMKK1 and CaMKK2. An Involved in nuclear import motif is present at residues 263 to 264 (KR). The autoinhibitory domain stretch occupies residues 276–316 (IAGDTALDKNIHQSVSEQIKKNFAKSKWKQAFNATAVVRHM). Residues 296–317 (KNFAKSKWKQAFNATAVVRHMR) form a calmodulin-binding region. Positions 315-321 (HMRKLQL) match the Nuclear export signal motif.

Belongs to the protein kinase superfamily. CAMK Ser/Thr protein kinase family. CaMK subfamily. Monomer. Interacts with XPO1. Post-translationally, phosphorylated by CaMKK1 and CaMKK2 on Thr-177. Polybiquitinated by the E3 ubiquitin-protein ligase complex SCF(FBXL12), leading to proteasomal degradation. Widely expressed.

It localises to the cytoplasm. The protein localises to the nucleus. It carries out the reaction L-seryl-[protein] + ATP = O-phospho-L-seryl-[protein] + ADP + H(+). The catalysed reaction is L-threonyl-[protein] + ATP = O-phospho-L-threonyl-[protein] + ADP + H(+). With respect to regulation, activated by Ca(2+)/calmodulin. Binding of calmodulin results in conformational change that relieves intrasteric autoinhibition and allows phosphorylation of Thr-177 within the activation loop by CaMKK1 or CaMKK2. Phosphorylation of Thr-177 results in several fold increase in total activity. Unlike CaMK4, is unable to exhibit autonomous activity after Ca(2+)/calmodulin activation. In terms of biological role, calcium/calmodulin-dependent protein kinase that operates in the calcium-triggered CaMKK-CaMK1 signaling cascade and, upon calcium influx, regulates transcription activators activity, cell cycle, hormone production, cell differentiation, actin filament organization and neurite outgrowth. Recognizes the substrate consensus sequence [MVLIF]-x-R-x(2)-[ST]-x(3)-[MVLIF]. Regulates axonal extension and growth cone motility in hippocampal and cerebellar nerve cells. Upon NMDA receptor-mediated Ca(2+) elevation, promotes dendritic growth in hippocampal neurons and is essential in synapses for full long-term potentiation (LTP) and ERK2-dependent translational activation. Downstream of NMDA receptors, promotes the formation of spines and synapses in hippocampal neurons by phosphorylating ARHGEF7/BETAPIX on 'Ser-516', which results in the enhancement of ARHGEF7 activity and activation of RAC1. Promotes neuronal differentiation and neurite outgrowth by activation and phosphorylation of MARK2 on 'Ser-91', 'Ser-92', 'Ser-93' and 'Ser-294'. Promotes nuclear export of HDAC5 and binding to 14-3-3 by phosphorylation of 'Ser-259' and 'Ser-498' in the regulation of muscle cell differentiation. Regulates NUMB-mediated endocytosis by phosphorylation of NUMB on 'Ser-275' and 'Ser-294'. Involved in the regulation of basal and estrogen-stimulated migration of medulloblastoma cells through ARHGEF7/BETAPIX phosphorylation. Is required for proper activation of cyclin-D1/CDK4 complex during G1 progression in diploid fibroblasts. Plays a role in K(+) and ANG2-mediated regulation of the aldosterone synthase (CYP11B2) to produce aldosterone in the adrenal cortex. Phosphorylates EIF4G3/eIF4GII. In vitro phosphorylates CREB1, ATF1, CFTR, MYL9 and SYN1/synapsin I. The protein is Calcium/calmodulin-dependent protein kinase type 1 (Camk1) of Rattus norvegicus (Rat).